The primary structure comprises 424 residues: Adenylosuccinate synthetase (424 aa).

GTP is bound by residues 12–18 and 40–42; these read GDEGKGK and GHT. The active-site Proton acceptor is the Asp13. Asp13 and Gly40 together coordinate Mg(2+). Residues 13 to 16, 38 to 41, Thr130, Arg144, Asn220, Thr235, and Arg299 contribute to the IMP site; these read DEGK and NAGH. His41 functions as the Proton donor in the catalytic mechanism. Position 295-301 (295-301) interacts with substrate; it reads VTTGRRR. GTP-binding positions include Arg301, 327 to 329, and 412 to 414; these read KLD and GTG.

The protein belongs to the adenylosuccinate synthetase family. In terms of assembly, homodimer. The cofactor is Mg(2+).

The protein resides in the cytoplasm. The enzyme catalyses IMP + L-aspartate + GTP = N(6)-(1,2-dicarboxyethyl)-AMP + GDP + phosphate + 2 H(+). It participates in purine metabolism; AMP biosynthesis via de novo pathway; AMP from IMP: step 1/2. Functionally, plays an important role in the de novo pathway and in the salvage pathway of purine nucleotide biosynthesis. Catalyzes the first committed step in the biosynthesis of AMP from IMP. This chain is Adenylosuccinate synthetase, found in Aspergillus niger (strain ATCC MYA-4892 / CBS 513.88 / FGSC A1513).